We begin with the raw amino-acid sequence, 361 residues long: 1D-myo-inositol 2-acetamido-2-deoxy-alpha-D-glucopyranoside deacetylase (361 aa).

Positions 1–12 (MTTTPQPPPQPD) are enriched in pro residues. A disordered region spans residues 1-27 (MTTTPQPPPQPDETPEGAAGAATAGRD). Low complexity predominate over residues 16–25 (EGAAGAATAG). Zn(2+) is bound by residues H66, D69, and H207.

The protein belongs to the MshB deacetylase family. Zn(2+) serves as cofactor.

It carries out the reaction 1D-myo-inositol 2-acetamido-2-deoxy-alpha-D-glucopyranoside + H2O = 1D-myo-inositol 2-amino-2-deoxy-alpha-D-glucopyranoside + acetate. Functionally, catalyzes the deacetylation of 1D-myo-inositol 2-acetamido-2-deoxy-alpha-D-glucopyranoside (GlcNAc-Ins) in the mycothiol biosynthesis pathway. The protein is 1D-myo-inositol 2-acetamido-2-deoxy-alpha-D-glucopyranoside deacetylase of Kineococcus radiotolerans (strain ATCC BAA-149 / DSM 14245 / SRS30216).